Here is a 556-residue protein sequence, read N- to C-terminus: Protein misato homolog 1 (556 aa).

Position 41 is a phosphoserine (Ser-41).

The protein belongs to the misato family.

Its subcellular location is the mitochondrion outer membrane. The protein resides in the cytoplasm. In terms of biological role, involved in the regulation of mitochondrial distribution and morphology. Required for mitochondrial fusion and mitochondrial network formation. This chain is Protein misato homolog 1 (Msto1), found in Mus musculus (Mouse).